We begin with the raw amino-acid sequence, 471 residues long: DnaJ protein P58IPK homolog B (471 aa).

Residues 1 to 24 (MARWPWRWRVLLPLLLLHSSPVFA) form the signal peptide. 8 TPR repeats span residues 32–65 (PSTL…DPNH), 66–99 (SEAY…KPGS), 112–146 (AQNA…SPNC), 148–180 (KAKL…DEDN), 181–214 (LDAL…DPEH), 227–260 (LLKK…DPDH), 265–298 (VHLY…DGEL), and 300–332 (DALT…SPQD). Asn64 is a glycosylation site (N-linked (GlcNAc...) asparagine). Positions 353–419 (DWYKILGISK…DKRVRYDRGE (67 aa)) constitute a J domain.

As to quaternary structure, interacts with BIP1.

It localises to the endoplasmic reticulum lumen. May play a role in protein folding in the endoplasmic reticulum. The protein is DnaJ protein P58IPK homolog B of Oryza sativa subsp. japonica (Rice).